The following is an 857-amino-acid chain: Trehalose transporter 1 (857 aa).

Disordered stretches follow at residues 1-28 (MSGRDNRGAGGGGGGHQPLSNAMGKLKE) and 62-202 (DPFL…QKAT). The Cytoplasmic segment spans residues 1–392 (MSGRDNRGAG…VYRPTTNPIY (392 aa)). At A9 the chain carries Phosphothreonine. G12 bears the Phosphoserine mark. Positions 69–81 (VSPQRHPQNTVRT) are enriched in polar residues. Residues 134-143 (EIREHRDRQQ) show a composition bias toward basic and acidic residues. Residues 171–181 (GNSNTNSNKAA) show a composition bias toward polar residues. Phosphoserine is present on residues S248, S249, and S250. 2 disordered regions span residues 249–269 (SSEEEFHKTRREFQGRKHQSL) and 280–299 (VLQGSSTDSDEEGEDAEHKR). Phosphoserine occurs at positions 320 and 322. The disordered stretch occupies residues 327–346 (LTSRQHFQQQRSISTDSRKS). The segment covering 330–341 (RQHFQQQRSIST) has biased composition (polar residues). A helical membrane pass occupies residues 393–413 (IWTQVLAALSVSLGSLVVGFV). The Extracellular portion of the chain corresponds to 414–440 (SAYTSPALVSMTDRNITSFEVTQDAGS). A glycan (N-linked (GlcNAc...) asparagine) is linked at N428. Residues 441-461 (WVGGIMPLAGLAGGIAGGPLI) form a helical membrane-spanning segment. Residues 462–473 (EYLGRRNTILAT) are Cytoplasmic-facing. The chain crosses the membrane as a helical span at residues 474–494 (AVPFIVSSLLIACAVNVAMVL). Over 495–497 (CGR) the chain is Extracellular. The chain crosses the membrane as a helical span at residues 498–518 (FLAGFCVGIASLSLPVYLGET). Topologically, residues 519–528 (VQPEVRGTLG) are cytoplasmic. The helical transmembrane segment at 529-549 (LLPTAFGNIGILLCFVAGSFM) threads the bilayer. Residue N550 is glycosylated (N-linked (GlcNAc...) asparagine). Residues 550 to 552 (NWS) are Extracellular-facing. The helical transmembrane segment at 553–573 (MLAFLGAALPVPFLILMFLIP) threads the bilayer. At 574–636 (ETPRWFVGRG…ELLKLNNLKP (63 aa)) the chain is on the cytoplasmic side. Residues 637–657 (LSISLGLMFFQQFSGINAVIF) traverse the membrane as a helical segment. The Extracellular segment spans residues 658 to 673 (YTVQIFKDAGSTIDGN). Residues 674–694 (LCTIIVGIVNFLATFIGIVLI) traverse the membrane as a helical segment. Topologically, residues 695–700 (DRAGRK) are cytoplasmic. Residues 701-721 (ILLYVSDIAMVLTLFVLGGFF) form a helical membrane-spanning segment. At 722–740 (YCKTYGPDVSHLGWLPLTC) the chain is on the extracellular side. The helical transmembrane segment at 741–761 (FVIYILGFSLGFGPIPWLMMG) threads the bilayer. The Cytoplasmic portion of the chain corresponds to 762 to 767 (EILPAK). A helical membrane pass occupies residues 768–788 (IRGSAASVATAFNWFCTFVVT). Residues 789 to 801 (KTFQDLTVAMGAH) are Extracellular-facing. The chain crosses the membrane as a helical span at residues 802–822 (GAFWLFGAICFVGLFFVIIYV). The Cytoplasmic portion of the chain corresponds to 823 to 857 (PETQGKTLEDIERKMMGRVRRMSSVANIKPLSFNM). 2 positions are modified to phosphoserine: S845 and S846.

The protein belongs to the major facilitator superfamily. Sugar transporter (TC 2.A.1.1) family. Trehalose transporter subfamily. As to expression, expressed in perineurial glia of the outer layer of the nervous system that forms the blood brain barrier (at protein level). Expressed in the fat body (at protein level). In terms of tissue distribution, may be specifically expressed in perineurial glia (at protein level). May be specifically expressed in the fat body (at protein level).

The protein resides in the cell membrane. It is found in the vesicle. It catalyses the reaction alpha,alpha-trehalose(in) = alpha,alpha-trehalose(out). It carries out the reaction D-glucose(out) = D-glucose(in). Functionally, low-capacity facilitative transporter for trehalose. Can also transport glucose. Does not transport maltose, sucrose, lactose or fructose. Mediates the bidirectional transfer of trehalose. Responsible for the transport of trehalose synthesized in the fat body and the incorporation of trehalose into other tissues that require a carbon source, thereby regulating trehalose levels in the hemolymph. Required in glial cells of the blood brain barrier to fuel glycolysis but not required in neurons. Neurons rely on the citric acid cycle for their energy needs and utilise alanine and lactate, by-products of glial cell glycolysis released into the hemolymph, as fuel. Increased expression in glial cells of the blood brain barrier during starvation and increased cell surface localization enhances carbohydrate uptake to protect the central nervous system from restricted nutrient availability. This Drosophila melanogaster (Fruit fly) protein is Trehalose transporter 1.